A 211-amino-acid chain; its full sequence is Large ribosomal subunit protein uL4 (211 aa).

Residues 42-87 are disordered; sequence AHMRQGTASTLTRSEVRGGGRKPYKQKGTGRARQGSVRTPLRPGGG. The segment covering 60-71 has biased composition (basic residues); sequence GGRKPYKQKGTG.

It belongs to the universal ribosomal protein uL4 family. In terms of assembly, part of the 50S ribosomal subunit.

In terms of biological role, one of the primary rRNA binding proteins, this protein initially binds near the 5'-end of the 23S rRNA. It is important during the early stages of 50S assembly. It makes multiple contacts with different domains of the 23S rRNA in the assembled 50S subunit and ribosome. Forms part of the polypeptide exit tunnel. The protein is Large ribosomal subunit protein uL4 of Synechococcus sp. (strain CC9902).